A 264-amino-acid polypeptide reads, in one-letter code: Phosphoinositide-3-kinase-interacting protein 1 (264 aa).

Positions 1-21 (MLLAWVHTFLLSNMLLAEAYG) are cleaved as a signal peptide. Over 22-170 (SGGCFWDNGH…SKEKKDLGTL (149 aa)) the chain is Extracellular. Residues 24–101 (GCFWDNGHLY…EKRPCEDVSC (78 aa)) form the Kringle domain. Disulfide bonds link Cys25-Cys101, Cys46-Cys82, and Cys70-Cys96. The segment at 94 to 129 (RPCEDVSCPETTSQAPPPSSAMELEEKSGAPGDKEA) is disordered. The span at 117 to 129 (LEEKSGAPGDKEA) shows a compositional bias: basic and acidic residues. The helical transmembrane segment at 171–191 (GYVLGITMMVIILAIGAGIIV) threads the bilayer. Residues 192–264 (GYTYKRGKDL…LTGQAGTPGA (73 aa)) lie on the Cytoplasmic side of the membrane.

Its subcellular location is the cell membrane. Negative regulator of hepatic phosphatidylinositol 3-kinase (PI3K) activity. The sequence is that of Phosphoinositide-3-kinase-interacting protein 1 (Pik3ip1) from Mus musculus (Mouse).